The sequence spans 138 residues: D-ribose pyranase (138 aa).

Residue His-20 is the Proton donor of the active site. Residues Asp-28, His-105, and 127-129 each bind substrate; that span reads YAN.

It belongs to the RbsD / FucU family. RbsD subfamily. In terms of assembly, homodecamer.

It localises to the cytoplasm. The enzyme catalyses beta-D-ribopyranose = beta-D-ribofuranose. Its pathway is carbohydrate metabolism; D-ribose degradation; D-ribose 5-phosphate from beta-D-ribopyranose: step 1/2. Its function is as follows. Catalyzes the interconversion of beta-pyran and beta-furan forms of D-ribose. This is D-ribose pyranase from Psychromonas ingrahamii (strain DSM 17664 / CCUG 51855 / 37).